The chain runs to 236 residues: H2HPP isomerase (236 aa).

Cupin type-1 domains are found at residues 40-106 (YVPP…AIDI) and 151-215 (NIPG…SKSV). His-50, His-52, Gln-56, His-91, His-162, His-164, Gln-168, and His-202 together coordinate a divalent metal cation. Tyr-223 contacts substrate.

In terms of assembly, monomer. It depends on Fe(2+) as a cofactor. Co(2+) serves as cofactor.

It localises to the cytoplasm. It carries out the reaction 3-[(4R)-4-hydroxycyclohexa-1,5-dien-1-yl]-2-oxopropanoate = 3-[(1E,4R)-4-hydroxycyclohex-2-en-1-ylidene]pyruvate. It participates in antibiotic biosynthesis; bacilysin biosynthesis. Its function is as follows. Part of the bacABCDEF operon responsible for the biosynthesis of the nonribosomally synthesized dipeptide antibiotic bacilysin, composed of L-alanine and L-anticapsin. Bacilysin is an irreversible inactivator of the glutaminase domain of glucosamine synthetase. BacB catalyzes the allylic isomerization of the endocyclic-delta(4),delta(8)-7R-dihydro-hydroxyphenylpyruvate (en-H2HPP) to generate a mixture of 3E,7R- and 3Z, 7R-olefins of the exocyclic-delta(3),delta(5)-dihydro-hydroxyphenylpyruvate (ex-H2HPP). The chain is H2HPP isomerase from Bacillus subtilis.